The chain runs to 699 residues: Endoplasmic reticulum mannosyl-oligosaccharide 1,2-alpha-mannosidase (699 aa).

Over 1 to 84 (MAACEGRRSG…WKQLSRLQRN (84 aa)) the chain is Cytoplasmic. The chain crosses the membrane as a helical; Signal-anchor for type II membrane protein span at residues 85–105 (MILFLLAFLLFCGLLFYINLA). Topologically, residues 106–699 (DHWKALAFRL…AHPLPIWTPA (594 aa)) are lumenal. Residues 125–243 (IAGLKPANPP…LPPARTQGTP (119 aa)) form a disordered region. Basic and acidic residues predominate over residues 176 to 201 (DLKDGTQEEATKRQEAPVDPRPEGDP). Glu-330 functions as the Proton donor in the catalytic mechanism. Residue Asp-463 is part of the active site. A disulfide bridge connects residues Cys-527 and Cys-556. Glu-570 serves as the catalytic Proton donor. The active site involves Glu-599. Thr-688 provides a ligand contact to Ca(2+).

Belongs to the glycosyl hydrolase 47 family. Ca(2+) is required as a cofactor. As to expression, widely expressed.

Its subcellular location is the endoplasmic reticulum membrane. It catalyses the reaction N(4)-(alpha-D-Man-(1-&gt;2)-alpha-D-Man-(1-&gt;2)-alpha-D-Man-(1-&gt;3)-[alpha-D-Man-(1-&gt;2)-alpha-D-Man-(1-&gt;3)-[alpha-D-Man-(1-&gt;2)-alpha-D-Man-(1-&gt;6)]-alpha-D-Man-(1-&gt;6)]-beta-D-Man-(1-&gt;4)-beta-D-GlcNAc-(1-&gt;4)-beta-D-GlcNAc)-L-asparaginyl-[protein] (N-glucan mannose isomer 9A1,2,3B1,2,3) + 4 H2O = N(4)-(alpha-D-Man-(1-&gt;3)-[alpha-D-Man-(1-&gt;3)-[alpha-D-Man-(1-&gt;6)]-alpha-D-Man-(1-&gt;6)]-beta-D-Man-(1-&gt;4)-beta-D-GlcNAc-(1-&gt;4)-beta-D-GlcNAc)-L-asparaginyl-[protein] (N-glucan mannose isomer 5A1,2) + 4 beta-D-mannose. It carries out the reaction N(4)-(alpha-D-Man-(1-&gt;2)-alpha-D-Man-(1-&gt;2)-alpha-D-Man-(1-&gt;3)-[alpha-D-Man-(1-&gt;3)-[alpha-D-Man-(1-&gt;2)-alpha-D-Man-(1-&gt;6)]-alpha-D-Man-(1-&gt;6)]-beta-D-Man-(1-&gt;4)-beta-D-GlcNAc-(1-&gt;4)-beta-D-GlcNAc)-L-asparaginyl-[protein] (N-glucan mannose isomer 8A1,2,3B1,3) + 3 H2O = N(4)-(alpha-D-Man-(1-&gt;3)-[alpha-D-Man-(1-&gt;3)-[alpha-D-Man-(1-&gt;6)]-alpha-D-Man-(1-&gt;6)]-beta-D-Man-(1-&gt;4)-beta-D-GlcNAc-(1-&gt;4)-beta-D-GlcNAc)-L-asparaginyl-[protein] (N-glucan mannose isomer 5A1,2) + 3 beta-D-mannose. It participates in protein modification; protein glycosylation. Inhibited by both 1-deoxymannojirimycin (dMNJ) and kifunensine. Functionally, involved in glycoprotein quality control targeting of misfolded glycoproteins for degradation. It primarily trims a single alpha-1,2-linked mannose residue from Man(9)GlcNAc(2) to produce Man(8)GlcNAc(2), but at high enzyme concentrations, as found in the ER quality control compartment (ERQC), it further trims the carbohydrates to Man(5-6)GlcNAc(2). The protein is Endoplasmic reticulum mannosyl-oligosaccharide 1,2-alpha-mannosidase (MAN1B1) of Homo sapiens (Human).